We begin with the raw amino-acid sequence, 873 residues long: K(+)/H(+) antiporter 1 (873 aa).

Topologically, residues 1-23 are extracellular; the sequence is MANTVGGILSGVNPFHYNSSSPL. The chain crosses the membrane as a helical span at residues 24-44; the sequence is TLFLFQACLILLVCNLIHIPF. Topologically, residues 45 to 51 are cytoplasmic; that stretch reads SMMRQPK. Residues 52–72 traverse the membrane as a helical segment; the sequence is VISEVISGVILGPTIFGQIPN. Topologically, residues 73–82 are extracellular; sequence YTNTIFPTSS. The helical transmembrane segment at 83–103 threads the bilayer; sequence IPGLNLVANLGIILFMFFLGL. Residues 104-116 are Cytoplasmic-facing; that stretch reads EVDIAFIKKHLKK. A helical transmembrane segment spans residues 117 to 137; that stretch reads ALVIGIVTLAVPFGFGCLLAI. At 138–154 the chain is on the extracellular side; that stretch reads PLFHTYANKTEGERHIK. The helical transmembrane segment at 155–175 threads the bilayer; sequence FSVFMVFIAVSISVTAFPVLC. Topologically, residues 176-188 are cytoplasmic; it reads RILNELRLIKDRA. Residues 189 to 209 form a helical membrane-spanning segment; the sequence is GIVVLAAGIINDIMGWILLAL. Residues 210 to 220 are Extracellular-facing; that stretch reads SIILSSAEGSP. A helical transmembrane segment spans residues 221-241; the sequence is VNTVYILLITFAWFLIYFFPL. The Cytoplasmic portion of the chain corresponds to 242-267; the sequence is KYLLRWVLIRTHELDRSKPSPLATMC. A helical transmembrane segment spans residues 268-288; the sequence is ILFIMFISAYFTDIIGVHPIF. Residues 289–316 are Extracellular-facing; sequence GAFIAGLVVPRDDHYVVKLTERMEDIPN. Residues 317 to 337 form a helical membrane-spanning segment; the sequence is IVFIPIYFAVAGLNVDLTLLN. Residues 338–341 lie on the Cytoplasmic side of the membrane; sequence EGRD. Residues 342-362 traverse the membrane as a helical segment; that stretch reads WGYVFATIGIAIFTKIISGTL. Residues 363–375 are Extracellular-facing; sequence TAKLTGLFWREAT. A helical transmembrane segment spans residues 376-396; it reads AAGVLMSCKGIVEIVVLTVGL. The Cytoplasmic segment spans residues 397 to 404; that stretch reads NAGIISRK. A helical transmembrane segment spans residues 405 to 425; that stretch reads IFGMFVLMALVSTFVTTPLTQ. The Extracellular segment spans residues 426 to 726; that stretch reads LVYPDSYRDG…DRFKRKRFNL (301 aa). Residue serine 557 is modified to Phosphoserine. Residue lysine 562 forms a Glycyl lysine isopeptide (Lys-Gly) (interchain with G-Cter in ubiquitin) linkage. Residues 727 to 747 traverse the membrane as a helical segment; that stretch reads LLPKPYLTQSDYLGLYLLLLI. Residues 748–873 lie on the Cytoplasmic side of the membrane; that stretch reads CYRDGYNNDN…TLIVHHFSSE (126 aa).

Belongs to the monovalent cation:proton antiporter 2 (CPA2) transporter (TC 2.A.37) family.

The protein resides in the membrane. Functionally, potassium-proton antiport. This chain is K(+)/H(+) antiporter 1 (KHA1), found in Saccharomyces cerevisiae (strain ATCC 204508 / S288c) (Baker's yeast).